The primary structure comprises 427 residues: Glutamate-1-semialdehyde 2,1-aminomutase (427 aa).

Lysine 265 bears the N6-(pyridoxal phosphate)lysine mark.

This sequence belongs to the class-III pyridoxal-phosphate-dependent aminotransferase family. HemL subfamily. Homodimer. Requires pyridoxal 5'-phosphate as cofactor.

The protein resides in the cytoplasm. It carries out the reaction (S)-4-amino-5-oxopentanoate = 5-aminolevulinate. Its pathway is porphyrin-containing compound metabolism; protoporphyrin-IX biosynthesis; 5-aminolevulinate from L-glutamyl-tRNA(Glu): step 2/2. The polypeptide is Glutamate-1-semialdehyde 2,1-aminomutase (Pseudomonas aeruginosa (strain LESB58)).